The following is a 191-amino-acid chain: Protein RER1A (191 aa).

Met-1 bears the N-acetylmethionine mark. Transmembrane regions (helical) follow at residues 39–57 (YRWIGTLVVALIYCLRVYY), 60–80 (GFYIIAYGLGIYLLNLLIGFL), 115–135 (FKFWYSMTKAFCIAFLMTFFS), and 136–156 (VFDVPVFWPILLCYWIVLFVL).

It belongs to the RER1 family.

It is found in the membrane. Functionally, involved in the retrieval of endoplasmic reticulum membrane proteins from the early Golgi compartment. This is Protein RER1A (RER1A) from Arabidopsis thaliana (Mouse-ear cress).